A 940-amino-acid chain; its full sequence is Valine--tRNA ligase (940 aa).

The 'HIGH' region signature appears at 47–57 (PNVTGILHMGH). Residues 564 to 568 (KLSKS) carry the 'KMSKS' region motif. Lysine 567 is a binding site for ATP. A coiled-coil region spans residues 873–937 (VEHIAKEKTR…ELQSILDKLA (65 aa)).

This sequence belongs to the class-I aminoacyl-tRNA synthetase family. ValS type 1 subfamily. Monomer.

It is found in the cytoplasm. The catalysed reaction is tRNA(Val) + L-valine + ATP = L-valyl-tRNA(Val) + AMP + diphosphate. Functionally, catalyzes the attachment of valine to tRNA(Val). As ValRS can inadvertently accommodate and process structurally similar amino acids such as threonine, to avoid such errors, it has a 'posttransfer' editing activity that hydrolyzes mischarged Thr-tRNA(Val) in a tRNA-dependent manner. In Chlamydia abortus (strain DSM 27085 / S26/3) (Chlamydophila abortus), this protein is Valine--tRNA ligase.